The following is a 431-amino-acid chain: Glucose-1-phosphate adenylyltransferase (431 aa).

Lys39 is a beta-D-fructose 1,6-bisphosphate binding site. AMP-binding residues include Arg40, His46, and Arg52. Tyr114 serves as a coordination point for alpha-D-glucose 1-phosphate. Arg130 is an AMP binding site. Residues Gly179, Glu194–Lys195, and Ser212 each bind alpha-D-glucose 1-phosphate. AMP contacts are provided by Glu370 and Arg386. Beta-D-fructose 1,6-bisphosphate is bound by residues Arg419–Arg423 and Gln429–Arg431.

It belongs to the bacterial/plant glucose-1-phosphate adenylyltransferase family. In terms of assembly, homotetramer.

The catalysed reaction is alpha-D-glucose 1-phosphate + ATP + H(+) = ADP-alpha-D-glucose + diphosphate. Its pathway is glycan biosynthesis; glycogen biosynthesis. With respect to regulation, allosterically activated by fructose-1,6-bisphosphate (F16BP) and inhibited by AMP. Functionally, involved in the biosynthesis of ADP-glucose, a building block required for the elongation reactions to produce glycogen. Catalyzes the reaction between ATP and alpha-D-glucose 1-phosphate (G1P) to produce pyrophosphate and ADP-Glc. This chain is Glucose-1-phosphate adenylyltransferase, found in Salmonella paratyphi A (strain ATCC 9150 / SARB42).